The chain runs to 291 residues: MLRREARLRREYLYRKAREEAERTAQERKDKVRRALEENRLIPTELRREALALQGSLEFDDAGGEGVTNHVDDEYRWAGVEDPKVMITTSRDPSSRLKMFAKELKLVFPGAQRMNRGRHEVGALVRACKANGVTDLLVVHEHRGTPVGLIVSHLPFGPTAYFTLCNVVMRHDIPDLGTASEAKPHLIMHGFSSRLGKRVSDILRYLFPVPKDDSRRVITFANQDDYISFRHHVYKKTNHRNVELTEVGPRFELKLYMIRLGTLEQEATADVEWRWHPYTNTAHKRVFLSAE.

The region spanning 83-264 (PKVMITTSRD…LYMIRLGTLE (182 aa)) is the Brix domain.

As to quaternary structure, part of the small subunit (SSU) processome, composed of more than 70 proteins and the RNA chaperone small nucleolar RNA (snoRNA) U3. Component of a heterotrimeric complex containing IMP3, IMP4 and MPHOSPH10. Interacts with MPHOSPH10.

It localises to the nucleus. The protein localises to the nucleolus. In terms of biological role, component of the 60-80S U3 small nucleolar ribonucleoprotein (U3 snoRNP). Required for the early cleavages during pre-18S ribosomal RNA processing. Part of the small subunit (SSU) processome, first precursor of the small eukaryotic ribosomal subunit. During the assembly of the SSU processome in the nucleolus, many ribosome biogenesis factors, an RNA chaperone and ribosomal proteins associate with the nascent pre-rRNA and work in concert to generate RNA folding, modifications, rearrangements and cleavage as well as targeted degradation of pre-ribosomal RNA by the RNA exosome. This is U3 small nucleolar ribonucleoprotein protein IMP4 (IMP4) from Bos taurus (Bovine).